Consider the following 344-residue polypeptide: Glycerol-3-phosphate dehydrogenase [NAD(P)+] (344 aa).

NADPH contacts are provided by Ser-18, Tyr-19, His-39, and Lys-113. Lys-113, Gly-142, and Thr-144 together coordinate sn-glycerol 3-phosphate. Ala-146 contacts NADPH. Sn-glycerol 3-phosphate contacts are provided by Lys-198, Asp-251, Ser-261, Arg-262, and Asn-263. The active-site Proton acceptor is the Lys-198. An NADPH-binding site is contributed by Arg-262. NADPH contacts are provided by Ile-286 and Glu-288.

The protein belongs to the NAD-dependent glycerol-3-phosphate dehydrogenase family.

It is found in the cytoplasm. It carries out the reaction sn-glycerol 3-phosphate + NAD(+) = dihydroxyacetone phosphate + NADH + H(+). It catalyses the reaction sn-glycerol 3-phosphate + NADP(+) = dihydroxyacetone phosphate + NADPH + H(+). Its pathway is membrane lipid metabolism; glycerophospholipid metabolism. Functionally, catalyzes the reduction of the glycolytic intermediate dihydroxyacetone phosphate (DHAP) to sn-glycerol 3-phosphate (G3P), the key precursor for phospholipid synthesis. The chain is Glycerol-3-phosphate dehydrogenase [NAD(P)+] from Blochmanniella pennsylvanica (strain BPEN).